A 510-amino-acid chain; its full sequence is 2,3-bisphosphoglycerate-independent phosphoglycerate mutase (510 aa).

Residues Asp-12 and Ser-62 each coordinate Mn(2+). Ser-62 acts as the Phosphoserine intermediate in catalysis. Residues His-123, 153–154 (RD), Arg-185, Arg-191, 261–264 (RPDR), and Lys-336 contribute to the substrate site. The Mn(2+) site is built by Asp-403, His-407, Asp-444, His-445, and His-462.

This sequence belongs to the BPG-independent phosphoglycerate mutase family. As to quaternary structure, monomer. It depends on Mn(2+) as a cofactor.

It carries out the reaction (2R)-2-phosphoglycerate = (2R)-3-phosphoglycerate. The protein operates within carbohydrate degradation; glycolysis; pyruvate from D-glyceraldehyde 3-phosphate: step 3/5. In terms of biological role, essential for rapid growth and for sporulation. Catalyzes the interconversion of 2-phosphoglycerate and 3-phosphoglycerate. The sequence is that of 2,3-bisphosphoglycerate-independent phosphoglycerate mutase from Priestia megaterium (strain ATCC 12872 / QMB1551) (Bacillus megaterium).